A 426-amino-acid chain; its full sequence is Phosphoribosylamine--glycine ligase (426 aa).

In terms of domain architecture, ATP-grasp spans 113–320 (KSLMTEAKIP…LLELLYRAST (208 aa)). 139–200 (LESKSIPIVI…EEFMEGQEAS (62 aa)) contacts ATP. Glutamate 290 and asparagine 292 together coordinate Mg(2+).

This sequence belongs to the GARS family. Mg(2+) serves as cofactor. It depends on Mn(2+) as a cofactor.

The enzyme catalyses 5-phospho-beta-D-ribosylamine + glycine + ATP = N(1)-(5-phospho-beta-D-ribosyl)glycinamide + ADP + phosphate + H(+). Its pathway is purine metabolism; IMP biosynthesis via de novo pathway; N(1)-(5-phospho-D-ribosyl)glycinamide from 5-phospho-alpha-D-ribose 1-diphosphate: step 2/2. The sequence is that of Phosphoribosylamine--glycine ligase from Leptospira interrogans serogroup Icterohaemorrhagiae serovar copenhageni (strain Fiocruz L1-130).